The following is a 190-amino-acid chain: Ion-translocating oxidoreductase complex subunit B (190 aa).

The segment at 1–26 (MTALWIAIAALSALGLLFGLVLGYAA) is hydrophobic. The 59-residue stretch at 32-90 (EEDPVAEQVDEILPQSQCGQCGYPGCRPYAEAVANGEMINKCAPGGEQVMLKLAELLNV) folds into the 4Fe-4S domain. [4Fe-4S] cluster is bound by residues Cys-49, Cys-52, Cys-57, Cys-73, Cys-115, Cys-118, Cys-121, Cys-125, Cys-145, Cys-148, Cys-151, and Cys-155. 4Fe-4S ferredoxin-type domains lie at 106 to 135 (QVAYIDEANCIGCTKCIQACPVDAIVGATR) and 136 to 165 (AMHTVITDLCTGCDLCVAPCPTDCIEMRPV).

The protein belongs to the 4Fe4S bacterial-type ferredoxin family. RnfB subfamily. The complex is composed of six subunits: RnfA, RnfB, RnfC, RnfD, RnfE and RnfG. It depends on [4Fe-4S] cluster as a cofactor.

It is found in the cell inner membrane. Its function is as follows. Part of a membrane-bound complex that couples electron transfer with translocation of ions across the membrane. This chain is Ion-translocating oxidoreductase complex subunit B, found in Serratia proteamaculans (strain 568).